The primary structure comprises 127 residues: Large ribosomal subunit protein uL22 (127 aa).

The segment covering 106-117 has biased composition (low complexity); it reads GAPEGVPVGGAV. Residues 106-127 are disordered; it reads GAPEGVPVGGAVDTPGDEEEEE.

This sequence belongs to the universal ribosomal protein uL22 family. Part of the 50S ribosomal subunit.

In terms of biological role, this protein binds specifically to 23S rRNA; its binding is stimulated by other ribosomal proteins, e.g. L4, L17, and L20. It is important during the early stages of 50S assembly. It makes multiple contacts with different domains of the 23S rRNA in the assembled 50S subunit and ribosome. The globular domain of the protein is located near the polypeptide exit tunnel on the outside of the subunit, while an extended beta-hairpin is found that lines the wall of the exit tunnel in the center of the 70S ribosome. The polypeptide is Large ribosomal subunit protein uL22 (Rubrobacter xylanophilus (strain DSM 9941 / JCM 11954 / NBRC 16129 / PRD-1)).